Consider the following 204-residue polypeptide: Ras-related protein RabQ (204 aa).

GTP is bound at residue 12-19 (GPPFVGKS). The Effector region signature appears at 34–42 (MDTTIGVEF). GTP-binding positions include 60–64 (DTAGQ) and 118–121 (NKCD). 2 S-geranylgeranyl cysteine lipidation sites follow: C202 and C203.

Belongs to the small GTPase superfamily. Rab family.

Its subcellular location is the cell membrane. This Dictyostelium discoideum (Social amoeba) protein is Ras-related protein RabQ (rabQ).